Consider the following 292-residue polypeptide: Expansin-like protein 6 (292 aa).

The signal sequence occupies residues 1–24 (MIKIIYLIVLLVLLFKNNHIIIKA). Residues 25 to 267 (DDCPFPQIPI…QITSNSNNIL (243 aa)) lie on the Extracellular side of the membrane. The region spanning 47–150 (HASCGFEKLT…IKVPCPTYGN (104 aa)) is the Expansin-like EG45 domain. Cystine bridges form between cysteine 50/cysteine 80 and cysteine 83/cysteine 145. Residue asparagine 92 is glycosylated (N-linked (GlcNAc...) asparagine). A helical membrane pass occupies residues 268–288 (PPSLYIIFLISILFLIINNIF). Topologically, residues 289 to 292 (SNKY) are cytoplasmic.

The protein belongs to the expansin family. Expansin A subfamily.

It localises to the membrane. Its function is as follows. May serve to lubricate the movement of the cellulose microfibrils during cell growth and wall extension and/or may serve to maintain the fluid state of the slug cell wall. This Dictyostelium discoideum (Social amoeba) protein is Expansin-like protein 6 (expl6).